A 377-amino-acid polypeptide reads, in one-letter code: MSDTPTLALAKDLLSRQSITPEDAGCQELMIKRLEALGFTIEIMVFEDTTNFWARRGNEAPLFTFAGHTDVVPTGDLTHWNTNPFEPTIIDGMLYARGAADMKGSLACMVVAVERFVGEHPNHKGSISFLITSDEEGPFINGTTRVVDTLQERNEIIDMCIVGEPSSTSHVGDVVKNGRRGSLTGNLTVKGIQGHVAYPHIARNPIHQAMPALSELATTVWDNGNDYFPPTSFQIPNMNGGTGASNVIPGTVDIMFNFRFSTESTVDELQQRVVEILDKHDLEYDLDWIINGLPFLTDTGDLLTAVVNAVDTVNQQKPQLLTTGGTSDGRFIAQMGSQVIELGPVNATIHKVNECVNVEDLEKLTDMYQEVLNNLLA.

Position 68 (histidine 68) interacts with Zn(2+). The active site involves aspartate 70. Aspartate 101 provides a ligand contact to Zn(2+). The active-site Proton acceptor is glutamate 135. 3 residues coordinate Zn(2+): glutamate 136, glutamate 164, and histidine 350.

It belongs to the peptidase M20A family. DapE subfamily. As to quaternary structure, homodimer. Zn(2+) is required as a cofactor. Requires Co(2+) as cofactor.

It catalyses the reaction N-succinyl-(2S,6S)-2,6-diaminopimelate + H2O = (2S,6S)-2,6-diaminopimelate + succinate. It participates in amino-acid biosynthesis; L-lysine biosynthesis via DAP pathway; LL-2,6-diaminopimelate from (S)-tetrahydrodipicolinate (succinylase route): step 3/3. Catalyzes the hydrolysis of N-succinyl-L,L-diaminopimelic acid (SDAP), forming succinate and LL-2,6-diaminopimelate (DAP), an intermediate involved in the bacterial biosynthesis of lysine and meso-diaminopimelic acid, an essential component of bacterial cell walls. In Aliivibrio fischeri (strain MJ11) (Vibrio fischeri), this protein is Succinyl-diaminopimelate desuccinylase.